An 806-amino-acid polypeptide reads, in one-letter code: Phenylalanine--tRNA ligase beta subunit (806 aa).

The tRNA-binding domain maps to 39 to 154; sequence SAGLKKIVVG…EAIAPGTDVY (116 aa). Residues 410-485 form the B5 domain; sequence PQPKVIQFDS…RLYGYDNLPS (76 aa). Mg(2+) contacts are provided by Asp-463, Asp-469, Glu-472, and Glu-473. The region spanning 713 to 806 is the FDX-ACB domain; it reads PKFPEVTRDI…LVATFQAKVR (94 aa).

The protein belongs to the phenylalanyl-tRNA synthetase beta subunit family. Type 1 subfamily. In terms of assembly, tetramer of two alpha and two beta subunits. It depends on Mg(2+) as a cofactor.

It localises to the cytoplasm. It catalyses the reaction tRNA(Phe) + L-phenylalanine + ATP = L-phenylalanyl-tRNA(Phe) + AMP + diphosphate + H(+). The sequence is that of Phenylalanine--tRNA ligase beta subunit from Latilactobacillus sakei subsp. sakei (strain 23K) (Lactobacillus sakei subsp. sakei).